Reading from the N-terminus, the 264-residue chain is S-adenosylmethionine decarboxylase proenzyme (264 aa).

Serine 112 serves as the catalytic Schiff-base intermediate with substrate; via pyruvic acid. Serine 112 carries the post-translational modification Pyruvic acid (Ser); by autocatalysis. The active-site Proton acceptor; for processing activity is the histidine 117. Cysteine 140 functions as the Proton donor; for catalytic activity in the catalytic mechanism.

The protein belongs to the prokaryotic AdoMetDC family. Type 2 subfamily. As to quaternary structure, heterooctamer of four alpha and four beta chains arranged as a tetramer of alpha/beta heterodimers. Pyruvate is required as a cofactor. Is synthesized initially as an inactive proenzyme. Formation of the active enzyme involves a self-maturation process in which the active site pyruvoyl group is generated from an internal serine residue via an autocatalytic post-translational modification. Two non-identical subunits are generated from the proenzyme in this reaction, and the pyruvate is formed at the N-terminus of the alpha chain, which is derived from the carboxyl end of the proenzyme. The post-translation cleavage follows an unusual pathway, termed non-hydrolytic serinolysis, in which the side chain hydroxyl group of the serine supplies its oxygen atom to form the C-terminus of the beta chain, while the remainder of the serine residue undergoes an oxidative deamination to produce ammonia and the pyruvoyl group blocking the N-terminus of the alpha chain.

The enzyme catalyses S-adenosyl-L-methionine + H(+) = S-adenosyl 3-(methylsulfanyl)propylamine + CO2. Its pathway is amine and polyamine biosynthesis; S-adenosylmethioninamine biosynthesis; S-adenosylmethioninamine from S-adenosyl-L-methionine: step 1/1. Functionally, catalyzes the decarboxylation of S-adenosylmethionine to S-adenosylmethioninamine (dcAdoMet), the propylamine donor required for the synthesis of the polyamines spermine and spermidine from the diamine putrescine. The polypeptide is S-adenosylmethionine decarboxylase proenzyme (Yersinia enterocolitica serotype O:8 / biotype 1B (strain NCTC 13174 / 8081)).